A 994-amino-acid polypeptide reads, in one-letter code: Myosin IA heavy chain (994 aa).

The 709-residue stretch at 12-720 folds into the Myosin motor domain; that stretch reads VGVEDLIMLT…PLFLLEDKRN (709 aa). 105–112 serves as a coordination point for ATP; that stretch reads GESGAGKT. Residues 574–654 are actin-binding; sequence TFIPTDKKRP…RAGYCYRQTF (81 aa). 2 IQ domains span residues 723–744 and 745–774; these read LNDLATKIGSVWKMYKQRKWYL and RTLAAIKIQRTYRGWLLVRECVKLKNQSIS. The 189-residue stretch at 782 to 970 folds into the TH1 domain; the sequence is RNRQSIKLSK…ANSPSFTAKA (189 aa).

The protein belongs to the TRAFAC class myosin-kinesin ATPase superfamily. Myosin family. Myosin I heavy chain is single-headed. Dimer of a heavy and a light chain. Inability to self-assemble into filaments.

Functionally, actin-based motor protein, possibly involved in a wide range of motile processes, such as cell movement across a surface, and extension and retraction of pseudopodia or lamellipodia. The chain is Myosin IA heavy chain (myoA) from Dictyostelium discoideum (Social amoeba).